Here is a 597-residue protein sequence, read N- to C-terminus: MNKETGMLKPWIEAQARLVEVAAGRAPADLVIRGGQWVNVHTREVIPGMDVAVADGRVAYVGPDAGPSVGPGTQVIEADGRFMVPGLIDAHMHVESGMLTPAGFAAAVIPHGTTTIFHDPHEIANVLGLEGVRLMRDESLLQPISMFTQMPSCAPSAPGLETTGQPITEGEVAQAMGWDGIVGLGEMMNFPGVASGDRQMLTEIAATRAAGKTVGGHYASPDLGRPFHAYVAGGANDDHETTTEAQGIARVRQGMGCMMRLGSAWYDVESQITAITEKGLDPRFFILCTDDSHSGTLVNDGHMNRVVRHAVDCGCDPLVAIQMATINAASHFGLERELGSITPGRRADVILTSDLRSLPIETVIAQGVVVAETGKLLVDCPRIAWPEAARDSVHLGRSLTGADFAVRATGDSARVRVIGVVENQAPTRALTAQLPIRDGVVEPQGETCHIALVERHRGTGGVVNGFVSGFGYQGRMAVASTVAHDSHHMIVVGTDRDSMAAAANHLGRIGGGVTVFRDGEELATVALPIAGLMSDRPAAEVAEAAQGIVKAMQDCGCTLNNAYMQHSLLALVVIPELRISDLGIVDVTRFELVDLMV.

This sequence belongs to the metallo-dependent hydrolases superfamily. Adenine deaminase family. Mn(2+) is required as a cofactor.

The catalysed reaction is adenine + H2O + H(+) = hypoxanthine + NH4(+). The chain is Adenine deaminase from Paracoccus denitrificans (strain Pd 1222).